The primary structure comprises 343 residues: MKKKVAILFGGQSTEHEVSRVSAASVLRNIDTSKYDLFPIGITKKGEWFEYTGSADKIENGEWEKDEFYKSPNGQAILFNKEVDVVFPVMHGLYGEDGTIQGLCKLVGVPCVGPSVLSSSVCMDKVYTKYVLEHFNIKQADYVVVHAHEYKTSKEEIIKEIENKLGYAVFIKPSNSGSSVGITKAHNRKELEAGLEEAMKYDRKILVEEALNAREIEVAVLGNEEPKAAIPGEIVPAKEFYDYEAKYENAASKLLIPANLSNENLEKIKNIAIEVYKALDCSGMSRVDFLVDKDTTEMYLNEVNTIPGFTSISMYPKLWAAAGKDYSKLIDELIELAASRNNA.

The 207-residue stretch at 129–335 folds into the ATP-grasp domain; that stretch reads KYVLEHFNIK…YSKLIDELIE (207 aa). Position 162–217 (162–217) interacts with ATP; sequence ENKLGYAVFIKPSNSGSSVGITKAHNRKELEAGLEEAMKYDRKILVEEALNAREIE. Mg(2+) contacts are provided by aspartate 288, glutamate 302, and asparagine 304.

This sequence belongs to the D-alanine--D-alanine ligase family. The cofactor is Mg(2+). It depends on Mn(2+) as a cofactor.

It is found in the cytoplasm. The catalysed reaction is 2 D-alanine + ATP = D-alanyl-D-alanine + ADP + phosphate + H(+). Its pathway is cell wall biogenesis; peptidoglycan biosynthesis. Its function is as follows. Cell wall formation. In Clostridium acetobutylicum (strain ATCC 824 / DSM 792 / JCM 1419 / IAM 19013 / LMG 5710 / NBRC 13948 / NRRL B-527 / VKM B-1787 / 2291 / W), this protein is D-alanine--D-alanine ligase.